Here is a 329-residue protein sequence, read N- to C-terminus: MQGSVTEFLKPRLVDIEQVSPTRAKVTLEPLERGFGHTLGNALRRILLSSMPGCAVTEVEIDGVLHEYSSKEGVQEDILEILLNLKGLAVILEGKDEAMLTLSKSGAGPVTAADITHDGDVTIANPDHVICHLTGNHDISMRIRVERGRGYVPASARAQNEDDDRPIGRLLVDASFSPVARIAYNVEAARVEQRTDLDKLVIDMTTNGTIDPEEAIRRSATILAEQLDAFVELRDVSVPEQKEEKPEFDPILLRPVDDLELTVRSANCLKAEAIHYIGDLVQRTEVELLKTPNLGKKSLTEIKDVLASRGLSLGMRLENWPPASLADDL.

The segment at 1–234 (MQGSVTEFLK…EQLDAFVELR (234 aa)) is alpha N-terminal domain (alpha-NTD). Residues 248–329 (FDPILLRPVD…WPPASLADDL (82 aa)) are alpha C-terminal domain (alpha-CTD).

This sequence belongs to the RNA polymerase alpha chain family. As to quaternary structure, homodimer. The RNAP catalytic core consists of 2 alpha, 1 beta, 1 beta' and 1 omega subunit. When a sigma factor is associated with the core the holoenzyme is formed, which can initiate transcription.

It catalyses the reaction RNA(n) + a ribonucleoside 5'-triphosphate = RNA(n+1) + diphosphate. Its function is as follows. DNA-dependent RNA polymerase catalyzes the transcription of DNA into RNA using the four ribonucleoside triphosphates as substrates. The protein is DNA-directed RNA polymerase subunit alpha of Shewanella amazonensis (strain ATCC BAA-1098 / SB2B).